The sequence spans 541 residues: Myrosinase 1 (541 aa).

The N-terminal stretch at 1–19 (MKLLMLAFVFLLALATCKG) is a signal peptide. Disulfide bonds link cysteine 24–cysteine 449, cysteine 32–cysteine 445, and cysteine 224–cysteine 232. N-linked (GlcNAc...) asparagine glycosylation is present at asparagine 33. Glutamine 57 lines the a beta-D-glucoside pocket. An N-linked (GlcNAc...) asparagine glycan is attached at asparagine 108. Histidine 159 is an a beta-D-glucoside binding site. Residue asparagine 175 is glycosylated (N-linked (GlcNAc...) asparagine). 204–205 (NQ) provides a ligand contact to a beta-D-glucoside. N-linked (GlcNAc...) asparagine glycosylation is present at asparagine 236. Residue tyrosine 348 coordinates a beta-D-glucoside. Residues asparagine 356 and asparagine 379 are each glycosylated (N-linked (GlcNAc...) asparagine). A beta-D-glucoside is bound by residues glutamate 420, tryptophan 468, 475–476 (EF), and phenylalanine 484. Residue glutamate 420 is the Nucleophile of the active site. 2 N-linked (GlcNAc...) asparagine glycosylation sites follow: asparagine 493 and asparagine 512.

The protein belongs to the glycosyl hydrolase 1 family. In terms of assembly, homodimer. As to expression, expressed in guard cells, phloem-associated cells and myrosin cells.

It localises to the vacuole. It catalyses the reaction a thioglucoside + H2O = a sugar + a thiol.. The catalysed reaction is Hydrolysis of terminal, non-reducing beta-D-glucosyl residues with release of beta-D-glucose.. Degradation of glucosinolates (glucose residue linked by a thioglucoside bound to an amino acid derivative) to glucose, sulfate and any of the products: thiocyanates, isothiocyanates, nitriles, epithionitriles or oxazolidine-2-thiones. These toxic degradation products can deter insect herbivores. Seems to function in abscisic acid (ABA) and methyl jasmonate (MeJA) signaling in guard cells. Functionally redundant with TGG2. Hydrolyzes sinigrin and, with lower efficiency, p-nitrophenyl beta-D-glucoside. The sequence is that of Myrosinase 1 from Arabidopsis thaliana (Mouse-ear cress).